The sequence spans 108 residues: ATP synthase peripheral stalk subunit F6, mitochondrial (108 aa).

The transit peptide at 1–32 (MTVQRIFRLSSVLRSAVSVHLRRNIGVTAVAF) directs the protein to the mitochondrion. Lysine 41, lysine 46, and lysine 79 each carry N6-acetyllysine. An N6-acetyllysine; alternate mark is found at lysine 84 and lysine 99. N6-succinyllysine; alternate is present on residues lysine 84 and lysine 99. Position 105 is an N6-acetyllysine (lysine 105). At serine 108 the chain carries Phosphoserine.

This sequence belongs to the eukaryotic ATPase subunit F6 family. Component of the ATP synthase complex composed at least of ATP5F1A/subunit alpha, ATP5F1B/subunit beta, ATP5MC1/subunit c (homooctomer), MT-ATP6/subunit a, MT-ATP8/subunit 8, ATP5ME/subunit e, ATP5MF/subunit f, ATP5MG/subunit g, ATP5MK/subunit k, ATP5MJ/subunit j, ATP5F1C/subunit gamma, ATP5F1D/subunit delta, ATP5F1E/subunit epsilon, ATP5PF/subunit F6, ATP5PB/subunit b, ATP5PD/subunit d, ATP5PO/subunit OSCP. ATP synthase complex consists of a soluble F(1) head domain (subunits alpha(3) and beta(3)) - the catalytic core - and a membrane F(0) domain - the membrane proton channel (subunits c, a, 8, e, f, g, k and j). These two domains are linked by a central stalk (subunits gamma, delta, and epsilon) rotating inside the F1 region and a stationary peripheral stalk (subunits F6, b, d, and OSCP).

It localises to the mitochondrion. Its subcellular location is the mitochondrion inner membrane. Functionally, subunit F6, of the mitochondrial membrane ATP synthase complex (F(1)F(0) ATP synthase or Complex V) that produces ATP from ADP in the presence of a proton gradient across the membrane which is generated by electron transport complexes of the respiratory chain. ATP synthase complex consist of a soluble F(1) head domain - the catalytic core - and a membrane F(1) domain - the membrane proton channel. These two domains are linked by a central stalk rotating inside the F(1) region and a stationary peripheral stalk. During catalysis, ATP synthesis in the catalytic domain of F(1) is coupled via a rotary mechanism of the central stalk subunits to proton translocation. In vivo, can only synthesize ATP although its ATP hydrolase activity can be activated artificially in vitro. Part of the complex F(0) domain. Part of the complex F(0) domain and the peripheric stalk, which acts as a stator to hold the catalytic alpha(3)beta(3) subcomplex and subunit a/ATP6 static relative to the rotary elements. This is ATP synthase peripheral stalk subunit F6, mitochondrial from Rattus norvegicus (Rat).